The chain runs to 62 residues: MNRGSISSGTPGLFVGSMRNTPFVVKINVIFLKVISNTAVSVFWRDRRIRFESDWLNSYFQK.

This sequence belongs to the asfivirus C62L family.

This is an uncharacterized protein from African swine fever virus (isolate Tick/South Africa/Pretoriuskop Pr4/1996) (ASFV).